A 492-amino-acid chain; its full sequence is Catalase isozyme 2 (492 aa).

Catalysis depends on residues His-65 and Asn-138. Residue Tyr-348 coordinates heme.

The protein belongs to the catalase family. Homotetramer. Heme serves as cofactor.

It is found in the peroxisome. The enzyme catalyses 2 H2O2 = O2 + 2 H2O. Functionally, occurs in almost all aerobically respiring organisms and serves to protect cells from the toxic effects of hydrogen peroxide. The chain is Catalase isozyme 2 (CAT2) from Solanum lycopersicum (Tomato).